We begin with the raw amino-acid sequence, 897 residues long: Probable bifunctional chitinase/lysozyme (897 aa).

The signal sequence occupies residues 1-24 (MKLNIFTKSMIGMGLVCSALPALA). In terms of domain architecture, Chitin-binding type-3 1 spans 25–91 (MEAWNNQQGG…SQFGNTLSCE (67 aa)). Disordered stretches follow at residues 90–127 (CEKS…SNSS), 182–222 (TEIS…PADK), and 287–333 (QYGN…DSVN). A compositionally biased stretch (low complexity) spans 95 to 111 (SSSSSNSNTPASNTPAN). Polar residues-rich tracts occupy residues 113 to 127 (GSAT…SNSS) and 182 to 197 (TEIS…TSAP). Residues 128–194 (VVAWNKQQGG…SETSNPQSCT (67 aa)) form the Chitin-binding type-3 2 domain. Residues 198 to 216 (QPSPDVKPAPDVKPAPDVQ) are compositionally biased toward pro residues. The Chitin-binding type-3 3 domain occupies 229–295 (VVAWKGQEGS…SQYGNPGSCS (67 aa)). Positions 309 to 318 (DPTPETPVTP) are enriched in pro residues. The span at 322–333 (NSEPSTPADSVN) shows a compositional bias: polar residues. Chitin-binding type-3 domains lie at 337-403 (LQAW…TTCE) and 459-529 (AKAW…PQFN). Residues 586–877 (KHVYAPYVDF…TNLSPEFHGL (292 aa)) enclose the GH18 domain. A disulfide bridge connects residues cysteine 628 and cysteine 673. Glutamate 700 serves as the catalytic Proton donor.

Belongs to the glycosyl hydrolase 18 family. Chitinase class II subfamily.

It is found in the periplasm. The catalysed reaction is Random endo-hydrolysis of N-acetyl-beta-D-glucosaminide (1-&gt;4)-beta-linkages in chitin and chitodextrins.. It carries out the reaction Hydrolysis of (1-&gt;4)-beta-linkages between N-acetylmuramic acid and N-acetyl-D-glucosamine residues in a peptidoglycan and between N-acetyl-D-glucosamine residues in chitodextrins.. Bifunctional enzyme with lysozyme/chitinase activity. This is Probable bifunctional chitinase/lysozyme (chiA) from Escherichia coli (strain K12).